A 262-amino-acid polypeptide reads, in one-letter code: MIDKTAFIHPTAIVEEGAVIGANAHIGPFCIVGPHVVIGEGTVLKSHVVVNGHTIIGRDNEIYQFASIGEVNQDLKYAGEPTRLEIGDRNRIRESVTIHRGTVQGGGLTKVGSDNLFMVNAHIAHDCTVGSRCILANNATLAGHVSVDDFAIIGGMTAVHQFCIIGAHVMIGGCSGVAQDVPPYVIAQGNHATPFGVNIEGLKRRGFSREAITAIRNAYKLMYRSGKTLEEAKPEVAALAEQHPEVKAFTEFFERSTRGLIR.

This sequence belongs to the transferase hexapeptide repeat family. LpxA subfamily. As to quaternary structure, homotrimer.

The protein localises to the cytoplasm. The catalysed reaction is a (3R)-hydroxyacyl-[ACP] + UDP-N-acetyl-alpha-D-glucosamine = a UDP-3-O-[(3R)-3-hydroxyacyl]-N-acetyl-alpha-D-glucosamine + holo-[ACP]. The protein operates within glycolipid biosynthesis; lipid IV(A) biosynthesis; lipid IV(A) from (3R)-3-hydroxytetradecanoyl-[acyl-carrier-protein] and UDP-N-acetyl-alpha-D-glucosamine: step 1/6. In terms of biological role, involved in the biosynthesis of lipid A, a phosphorylated glycolipid that anchors the lipopolysaccharide to the outer membrane of the cell. This chain is Acyl-[acyl-carrier-protein]--UDP-N-acetylglucosamine O-acyltransferase, found in Enterobacter sp. (strain 638).